The following is a 565-amino-acid chain: Adenine deaminase (565 aa).

The protein belongs to the metallo-dependent hydrolases superfamily. Adenine deaminase family. It depends on Mn(2+) as a cofactor.

The enzyme catalyses adenine + H2O + H(+) = hypoxanthine + NH4(+). This chain is Adenine deaminase, found in Gluconobacter oxydans (strain 621H) (Gluconobacter suboxydans).